Consider the following 442-residue polypeptide: SPRY domain-containing protein 3 (442 aa).

In terms of domain architecture, B30.2/SPRY spans 17-204 (DLNLHYRFLN…VRLHLNAELG (188 aa)). The segment at 371–394 (EGEEEEEEEEEEEDGEEIEPEHEG) is disordered. Over residues 372–390 (GEEEEEEEEEEEDGEEIEP) the composition is skewed to acidic residues.

This chain is SPRY domain-containing protein 3 (SPRYD3), found in Homo sapiens (Human).